A 101-amino-acid polypeptide reads, in one-letter code: Small ribosomal subunit protein uS14 (101 aa).

It belongs to the universal ribosomal protein uS14 family. In terms of assembly, part of the 30S ribosomal subunit. Contacts proteins S3 and S10.

Binds 16S rRNA, required for the assembly of 30S particles and may also be responsible for determining the conformation of the 16S rRNA at the A site. This is Small ribosomal subunit protein uS14 from Citrobacter koseri (strain ATCC BAA-895 / CDC 4225-83 / SGSC4696).